Consider the following 69-residue polypeptide: Sperm protamine P1 (69 aa).

2 stretches are compositionally biased toward basic residues: residues 1–30 (MARFRPSRSRSRSLYRRRRRSRRQRSRRGG) and 37–69 (KITRRGRGRGKSRRRRGRRSMRSSRRRRRRRRN). The disordered stretch occupies residues 1-69 (MARFRPSRSR…SRRRRRRRRN (69 aa)).

Belongs to the protamine P1 family. As to expression, testis.

The protein resides in the nucleus. Its subcellular location is the chromosome. In terms of biological role, protamines substitute for histones in the chromatin of sperm during the haploid phase of spermatogenesis. They compact sperm DNA into a highly condensed, stable and inactive complex. This chain is Sperm protamine P1 (PRM1), found in Tachyglossus aculeatus aculeatus (Southeast Australian short-beaked echidna).